The sequence spans 409 residues: DNA polymerase IV 2 (409 aa).

Positions 5 to 190 (IFMVDMESFF…LPIECLYGVG (186 aa)) constitute a UmuC domain. Residues Asp9 and Asp105 each contribute to the Mg(2+) site. Glu106 is an active-site residue.

The protein belongs to the DNA polymerase type-Y family. As to quaternary structure, monomer. The cofactor is Mg(2+).

It localises to the cytoplasm. The catalysed reaction is DNA(n) + a 2'-deoxyribonucleoside 5'-triphosphate = DNA(n+1) + diphosphate. Its function is as follows. Poorly processive, error-prone DNA polymerase involved in untargeted mutagenesis. Copies undamaged DNA at stalled replication forks, which arise in vivo from mismatched or misaligned primer ends. These misaligned primers can be extended by PolIV. Exhibits no 3'-5' exonuclease (proofreading) activity. May be involved in translesional synthesis, in conjunction with the beta clamp from PolIII. In Halalkalibacterium halodurans (strain ATCC BAA-125 / DSM 18197 / FERM 7344 / JCM 9153 / C-125) (Bacillus halodurans), this protein is DNA polymerase IV 2 (dinB2).